The sequence spans 395 residues: L-lactate dehydrogenase (395 aa).

The 380-residue stretch at 1 to 380 (MIISAASDYR…SKDSLVQELS (380 aa)) folds into the FMN hydroxy acid dehydrogenase domain. Residue tyrosine 24 participates in substrate binding. Residues serine 106 and glutamine 127 each contribute to the FMN site. Tyrosine 129 serves as a coordination point for substrate. Position 155 (threonine 155) interacts with FMN. Arginine 164 provides a ligand contact to substrate. Lysine 251 provides a ligand contact to FMN. Histidine 275 serves as the catalytic Proton acceptor. Arginine 278 contacts substrate. 306-330 (DSGIRNGLDVVRMIALGADSVLLGR) provides a ligand contact to FMN.

Belongs to the FMN-dependent alpha-hydroxy acid dehydrogenase family. The cofactor is FMN.

The protein localises to the cell inner membrane. The enzyme catalyses (S)-lactate + A = pyruvate + AH2. In terms of biological role, catalyzes the conversion of L-lactate to pyruvate. Is coupled to the respiratory chain. In Enterobacter sp. (strain 638), this protein is L-lactate dehydrogenase.